The chain runs to 325 residues: Malate dehydrogenase (325 aa).

Residues 10 to 15 (GAGNVG) and aspartate 34 contribute to the NAD(+) site. Substrate-binding residues include arginine 88 and arginine 94. Residues asparagine 101 and 124 to 126 (VSN) each bind NAD(+). Substrate is bound by residues asparagine 126 and arginine 157. Catalysis depends on histidine 181, which acts as the Proton acceptor.

It belongs to the LDH/MDH superfamily.

It carries out the reaction (S)-malate + NAD(+) = oxaloacetate + NADH + H(+). Catalyzes the reversible oxidation of malate to oxaloacetate. The sequence is that of Malate dehydrogenase (mdh) from Thermoplasma acidophilum (strain ATCC 25905 / DSM 1728 / JCM 9062 / NBRC 15155 / AMRC-C165).